A 472-amino-acid chain; its full sequence is POU domain, class 5, transcription factor 1 (472 aa).

Disordered regions lie at residues 127 to 154 (MPSE…YHLT) and 187 to 255 (ISQA…LTTE). Residues 220 to 234 (TAQNIPSAQAQSAPR) are compositionally biased toward polar residues. Residues 235–245 (SSGSSSGGCSN) show a composition bias toward low complexity. Residues 246–255 (SEEEETLTTE) show a composition bias toward acidic residues. The POU-specific domain occupies 249–323 (EETLTTEDLE…LLQRWLNEAE (75 aa)). Residues 343-402 (KRKRRTSLEGTVRSALESYFVKCPKPNTLEITHISDDLGLERDVVRVWFCNRRQKGKRLA) constitute a DNA-binding region (homeobox).

Belongs to the POU transcription factor family. Class-7 subfamily.

The protein localises to the nucleus. Its function is as follows. Involved in early development of embryos, especially in the process of gastrulation. May play an important role in establishing and specifying rhombomeric segments. Seems to be required to maintain the cells in a highly undifferentiated state. In contrast to POU2, T-POU2 lacks DNA-binding activity because of its incomplete pou domain structure. Overexpression of POU2 does not have any effect on development, whereas overexpression of t-POU2 causes developmental retardation or arrest before gastrulation. The sequence is that of POU domain, class 5, transcription factor 1 (pou5f1) from Danio rerio (Zebrafish).